A 252-amino-acid polypeptide reads, in one-letter code: Ribosomal RNA small subunit methyltransferase J (252 aa).

S-adenosyl-L-methionine-binding positions include 105 to 106 (RD), 121 to 122 (ER), and D175.

The protein belongs to the methyltransferase superfamily. RsmJ family.

The protein localises to the cytoplasm. It catalyses the reaction guanosine(1516) in 16S rRNA + S-adenosyl-L-methionine = N(2)-methylguanosine(1516) in 16S rRNA + S-adenosyl-L-homocysteine + H(+). Functionally, specifically methylates the guanosine in position 1516 of 16S rRNA. In Pasteurella multocida (strain Pm70), this protein is Ribosomal RNA small subunit methyltransferase J.